A 445-amino-acid chain; its full sequence is Phosphoglucosamine mutase (445 aa).

Residue Ser-102 is the Phosphoserine intermediate of the active site. The Mg(2+) site is built by Ser-102, Asp-241, Asp-243, and Asp-245. Ser-102 is subject to Phosphoserine.

It belongs to the phosphohexose mutase family. Requires Mg(2+) as cofactor. In terms of processing, activated by phosphorylation.

The catalysed reaction is alpha-D-glucosamine 1-phosphate = D-glucosamine 6-phosphate. In terms of biological role, catalyzes the conversion of glucosamine-6-phosphate to glucosamine-1-phosphate. This Enterobacter sp. (strain 638) protein is Phosphoglucosamine mutase.